The sequence spans 161 residues: SsrA-binding protein (161 aa).

The protein belongs to the SmpB family.

It localises to the cytoplasm. Required for rescue of stalled ribosomes mediated by trans-translation. Binds to transfer-messenger RNA (tmRNA), required for stable association of tmRNA with ribosomes. tmRNA and SmpB together mimic tRNA shape, replacing the anticodon stem-loop with SmpB. tmRNA is encoded by the ssrA gene; the 2 termini fold to resemble tRNA(Ala) and it encodes a 'tag peptide', a short internal open reading frame. During trans-translation Ala-aminoacylated tmRNA acts like a tRNA, entering the A-site of stalled ribosomes, displacing the stalled mRNA. The ribosome then switches to translate the ORF on the tmRNA; the nascent peptide is terminated with the 'tag peptide' encoded by the tmRNA and targeted for degradation. The ribosome is freed to recommence translation, which seems to be the essential function of trans-translation. This is SsrA-binding protein from Vesicomyosocius okutanii subsp. Calyptogena okutanii (strain HA).